A 99-amino-acid chain; its full sequence is U1-theraphotoxin-Tal1a (99 aa).

The signal sequence occupies residues 1–22 (MNTIQVIIFAVVLVLTVTVGQA). A propeptide spanning residues 23 to 57 (DEDSAETSLLRKLKEAEASLFGQHLEESQHSREKR) is cleaved from the precursor. Disulfide bonds link cysteine 58/cysteine 73, cysteine 65/cysteine 78, and cysteine 72/cysteine 93. Serine 98 is modified (serine amide).

This sequence belongs to the neurotoxin 14 (magi-1) family. 08 (Ltx-4) subfamily. Expressed by the venom gland.

It localises to the secreted. Insecticidal toxin that shows strong lethal effects on American cockroaches (P.americana) and common mealbeetle (T.molitor). Possibly acts by blocking ion channel currents. Also shows significant analgesic effects in mice models of pain including abdominal writhing induced by acetic acid and formalin-induced paw licking tests. In addition, exerts marked inhibition of proliferation of some human tumor cell lines including C8166, Molt-4, A-549, BIU-87, T24, and Calu-6. This chain is U1-theraphotoxin-Tal1a, found in Tliltocatl albopilosus (Curlyhair tarantula).